The primary structure comprises 182 residues: Adenine phosphoribosyltransferase (182 aa).

It belongs to the purine/pyrimidine phosphoribosyltransferase family. Homodimer.

It is found in the cytoplasm. It carries out the reaction AMP + diphosphate = 5-phospho-alpha-D-ribose 1-diphosphate + adenine. It participates in purine metabolism; AMP biosynthesis via salvage pathway; AMP from adenine: step 1/1. In terms of biological role, catalyzes a salvage reaction resulting in the formation of AMP, that is energically less costly than de novo synthesis. The sequence is that of Adenine phosphoribosyltransferase from Koribacter versatilis (strain Ellin345).